Consider the following 365-residue polypeptide: Probable flavin mononucleotide-dependent alkene reductase (365 aa).

FMN-binding positions include 30-32 (PLT), alanine 63, and glutamine 105. Tyrosine 191 serves as the catalytic Proton donor. Residues arginine 238, serine 303, and 324–325 (GT) contribute to the FMN site.

This sequence belongs to the NADH:flavin oxidoreductase/NADH oxidase family. As to quaternary structure, monomer. FMN serves as cofactor.

It is found in the cytoplasm. Its subcellular location is the cytosol. Its function is as follows. May function as a flavin mononucleotide (FMN)-dependent alkene reductase on substrates carrying alpha,beta-unsaturated carbonyl groups (ketones, aldehydes, carboxylic acids, esters, lactones or cyclic imides). The catalysis depends on NAD(P)H, which acts as a hydride donor for the reduction. Seems to be involved in metabolic pathways required for efficient replication of amastigotes within macrophages. Functionally, acts as a FMN-dependent nitroreductase that activates anti-leishmanial bicyclic nitroaromatic prodrugs including delamanid, DNDI-VL-2098 and (R)-PA-824, forming toxic products that kill the parasites. This chain is Probable flavin mononucleotide-dependent alkene reductase, found in Leishmania infantum.